The chain runs to 322 residues: N-acetyl-gamma-glutamyl-phosphate reductase (322 aa).

C132 is a catalytic residue.

The protein belongs to the NAGSA dehydrogenase family. Type 1 subfamily.

It localises to the cytoplasm. The catalysed reaction is N-acetyl-L-glutamate 5-semialdehyde + phosphate + NADP(+) = N-acetyl-L-glutamyl 5-phosphate + NADPH + H(+). It participates in amino-acid biosynthesis; L-arginine biosynthesis; N(2)-acetyl-L-ornithine from L-glutamate: step 3/4. In terms of biological role, catalyzes the NADPH-dependent reduction of N-acetyl-5-glutamyl phosphate to yield N-acetyl-L-glutamate 5-semialdehyde. The protein is N-acetyl-gamma-glutamyl-phosphate reductase of Bacteroides fragilis (strain YCH46).